The following is a 225-amino-acid chain: Shikimate kinase (225 aa).

An ATP-binding site is contributed by 27-32 (GAGKTT). Threonine 31 is a binding site for Mg(2+). Residues aspartate 49, arginine 73, and glycine 95 each coordinate substrate. Arginine 132 serves as a coordination point for ATP. Position 150 (arginine 150) interacts with substrate. A disordered region spans residues 186-225 (GGSEPDEAADAAGGSEPDEAADAAGGSEPDEAADAAGGKR).

The protein belongs to the shikimate kinase family. As to quaternary structure, monomer. Mg(2+) is required as a cofactor.

Its subcellular location is the cytoplasm. It catalyses the reaction shikimate + ATP = 3-phosphoshikimate + ADP + H(+). It participates in metabolic intermediate biosynthesis; chorismate biosynthesis; chorismate from D-erythrose 4-phosphate and phosphoenolpyruvate: step 5/7. Its function is as follows. Catalyzes the specific phosphorylation of the 3-hydroxyl group of shikimic acid using ATP as a cosubstrate. The polypeptide is Shikimate kinase (Frankia casuarinae (strain DSM 45818 / CECT 9043 / HFP020203 / CcI3)).